A 481-amino-acid polypeptide reads, in one-letter code: Exodeoxyribonuclease I (481 aa).

Residues 12–193 (LFYDYETFGK…SSDVYATMNI (182 aa)) enclose the Exonuclease domain. D15, E17, and D186 together coordinate Mg(2+). Substrate is bound at residue E17. The ExoI SH3-like domain occupies 202-350 (PKLFNFFFKY…KLKKFLCSIA (149 aa)). The region spanning 356 to 471 (NGSNVDLKMY…ELFEYVKYTR (116 aa)) is the ExoI C-terminal domain.

Monomer. Interacts with ssb (via C-terminus); this interaction stimulates the exonuclease activity by recruiting the enzyme to its substrate. Mg(2+) serves as cofactor.

The enzyme catalyses Exonucleolytic cleavage in the 3'- to 5'-direction to yield nucleoside 5'-phosphates.. In terms of biological role, degrades single-stranded DNA (ssDNA) in a highly processive manner. Also functions as a DNA deoxyribophosphodiesterase that releases deoxyribose-phosphate moieties following the cleavage of DNA at an apurinic/apyrimidinic (AP) site by either an AP endonuclease or AP lyase. The chain is Exodeoxyribonuclease I (sbcB) from Buchnera aphidicola subsp. Baizongia pistaciae (strain Bp).